Here is a 212-residue protein sequence, read N- to C-terminus: 3,4-dihydroxy-2-butanone 4-phosphate synthase (212 aa).

Residues 37–38 (RE), D42, 150–154 (RRGHT), and E174 contribute to the D-ribulose 5-phosphate site. Mg(2+) is bound at residue E38. A Mg(2+)-binding site is contributed by H153.

The protein belongs to the DHBP synthase family. As to quaternary structure, homodimer. The cofactor is Mg(2+). Mn(2+) is required as a cofactor.

It catalyses the reaction D-ribulose 5-phosphate = (2S)-2-hydroxy-3-oxobutyl phosphate + formate + H(+). Its pathway is cofactor biosynthesis; riboflavin biosynthesis; 2-hydroxy-3-oxobutyl phosphate from D-ribulose 5-phosphate: step 1/1. Catalyzes the conversion of D-ribulose 5-phosphate to formate and 3,4-dihydroxy-2-butanone 4-phosphate. The protein is 3,4-dihydroxy-2-butanone 4-phosphate synthase of Shewanella piezotolerans (strain WP3 / JCM 13877).